The following is a 106-amino-acid chain: L-rhamnose mutarotase (106 aa).

Tyrosine 20 lines the substrate pocket. The Proton donor role is filled by histidine 24. Substrate is bound by residues tyrosine 43 and tryptophan 78 to tryptophan 79.

It belongs to the rhamnose mutarotase family. As to quaternary structure, homodimer.

The protein resides in the cytoplasm. It carries out the reaction alpha-L-rhamnose = beta-L-rhamnose. It participates in carbohydrate metabolism; L-rhamnose metabolism. Functionally, involved in the anomeric conversion of L-rhamnose. The chain is L-rhamnose mutarotase from Rhizobium johnstonii (strain DSM 114642 / LMG 32736 / 3841) (Rhizobium leguminosarum bv. viciae).